The sequence spans 354 residues: Myosin-binding protein H-like (354 aa).

The disordered stretch occupies residues 1 to 47 (MEAATAPEVAAGSKLKVKEASPADAEPPQASPGQGAGSPTPQLLPPI). Serine 38 is modified (phosphoserine). The region spanning 45-139 (PPIEEHPKIW…GGLEATATID (95 aa)) is the Ig-like C2-type 1 domain. The Fibronectin type-III domain maps to 148 to 238 (PPQSIKLVDV…ETAPITTDLA (91 aa)). The Ig-like C2-type 2 domain occupies 261–345 (PKFTQPLADC…VNPLGEASVD (85 aa)). A disulfide bridge connects residues cysteine 282 and cysteine 333. The residue at position 321 (arginine 321) is an Omega-N-methylarginine.

It belongs to the immunoglobulin superfamily. MyBP family. In terms of tissue distribution, expressed in heart, with higher expression in the atria. Expressed in left atrium and ventricle, arteria mammaria interna and skeletal muscle. As to expression, expressed specifically en the left atrium.

It localises to the cytoplasm. Its subcellular location is the myofibril. The protein localises to the sarcomere. In terms of biological role, myosin-binding protein which plays a role in cardiac function. Seems to regulate conduction in the atria and ventricular conduction systems. The polypeptide is Myosin-binding protein H-like (Homo sapiens (Human)).